A 609-amino-acid chain; its full sequence is Glutamine--fructose-6-phosphate aminotransferase [isomerizing] (609 aa).

The Nucleophile; for GATase activity role is filled by C2. Residues 2-218 (CGIVGAVAQR…EGDIAEVTRR (217 aa)) form the Glutamine amidotransferase type-2 domain. SIS domains are found at residues 286–426 (AAKL…LKGV) and 458–599 (LAED…VDQP). Residue K604 is the For Fru-6P isomerization activity of the active site.

In terms of assembly, homodimer.

Its subcellular location is the cytoplasm. It carries out the reaction D-fructose 6-phosphate + L-glutamine = D-glucosamine 6-phosphate + L-glutamate. Its function is as follows. Catalyzes the first step in hexosamine metabolism, converting fructose-6P into glucosamine-6P using glutamine as a nitrogen source. In Photorhabdus laumondii subsp. laumondii (strain DSM 15139 / CIP 105565 / TT01) (Photorhabdus luminescens subsp. laumondii), this protein is Glutamine--fructose-6-phosphate aminotransferase [isomerizing].